The primary structure comprises 1255 residues: Pre-mRNA-splicing factor ATP-dependent RNA helicase DEAH7 (1255 aa).

Positions 1–316 (MGVDPFKTTE…SDEDRSQGAE (316 aa)) are disordered. The span at 13–60 (EADKETNGGVPVKDKLTFKAPERKSRLGLDARAIEKKDNAKTEGEFKV) shows a compositional bias: basic and acidic residues. Residues 109 to 137 (AQESTVTTENAGTSDISITPRTLSCTSSY) are compositionally biased toward polar residues. Short sequence motifs (nuclear localization signal) lie at residues 144–153 (RHREEHRRDR) and 172–191 (RRRE…KRRR). Over residues 144 to 219 (RHREEHRRDR…EWERSPHGDR (76 aa)) the composition is skewed to basic and acidic residues. Low complexity-rich tracts occupy residues 220 to 240 (GSSY…AASP) and 271 to 290 (PIRA…GGRS). The segment covering 297 to 316 (REGDLTNEGHSDEDRSQGAE) has biased composition (basic and acidic residues). The region spanning 568-731 (LQVIRENQVI…FGSVPIFNIP (164 aa)) is the Helicase ATP-binding domain. 581–588 (GETGSGKT) is an ATP binding site. The DEAH box signature appears at 678–681 (DEAH). In terms of domain architecture, Helicase C-terminal spans 753 to 933 (AVKQAMTIHI…NVVLLLKSLK (181 aa)). Over residues 1190–1224 (LEHKKKQKEEKSGMEEEMEKLRRDQVESELRSKER) the composition is skewed to basic and acidic residues. The disordered stretch occupies residues 1190–1255 (LEHKKKQKEE…TFLRPKKLGL (66 aa)).

The protein belongs to the DEAD box helicase family. DEAH subfamily. PRP16 sub-subfamily. Interacts with the Phytophthora PSR1 protein.

The protein localises to the nucleus. The catalysed reaction is ATP + H2O = ADP + phosphate + H(+). In terms of biological role, involved in pre-mRNA splicing by mediating structural transitions of the spliceosome during the catalytic step. Facilitates expression of genes involved in auxin-mediated development including male-gametophyte transmission, apical-basal patterning of embryonic and gynoecium development, stamen development, phyllotactic flower positioning, and vascular development. Also involved in root-meristem maintenance and planar polarity of root-hair positioning. Acts as a component of RNA silencing that regulates distinct classes of endogenous small RNAs. Functions as a positive regulator of plant immunity. The chain is Pre-mRNA-splicing factor ATP-dependent RNA helicase DEAH7 from Arabidopsis thaliana (Mouse-ear cress).